The sequence spans 147 residues: Large ribosomal subunit protein bL9 (147 aa).

Belongs to the bacterial ribosomal protein bL9 family.

Functionally, binds to the 23S rRNA. The sequence is that of Large ribosomal subunit protein bL9 from Bdellovibrio bacteriovorus (strain ATCC 15356 / DSM 50701 / NCIMB 9529 / HD100).